The following is a 101-amino-acid chain: Protein Tat (101 aa).

Positions 1 to 20 are disordered; sequence MEPVDPNLEPWKHPGSQPTT. The interaction with human CREBBP stretch occupies residues 1-24; it reads MEPVDPNLEPWKHPGSQPTTACSN. A transactivation region spans residues 1-48; it reads MEPVDPNLEPWKHPGSQPTTACSNCYCKVCCWHCQLCFLKKGLGISYG. Positions 22, 25, and 27 each coordinate Zn(2+). The cysteine-rich stretch occupies residues 22–37; sequence CSNCYCKVCCWHCQLC. K28 carries the post-translational modification N6-acetyllysine; by host PCAF. The Zn(2+) site is built by C30, H33, C34, and C37. A core region spans residues 38–48; that stretch reads FLKKGLGISYG. A disordered region spans residues 48–101; that stretch reads GKKKRKPRRGPPQGSKDHQTLIPKQPLPQSQRVSAGQEESKKKVESKAKTDRFA. Residues 49-57 carry the Nuclear localization signal, RNA-binding (TAR), and protein transduction motif; that stretch reads KKKRKPRRG. The interaction with the host capping enzyme RNGTT stretch occupies residues 49–86; it reads KKKRKPRRGPPQGSKDHQTLIPKQPLPQSQRVSAGQEE. N6-acetyllysine; by host EP300 and GCN5L2 is present on residues K50 and K51. The residue at position 52 (R52) is an Asymmetric dimethylarginine; by host PRMT6. Residue K71 forms a Glycyl lysine isopeptide (Lys-Gly) (interchain with G-Cter in ubiquitin) linkage. A compositionally biased stretch (basic and acidic residues) spans 85–101; the sequence is EESKKKVESKAKTDRFA.

The protein belongs to the lentiviruses Tat family. Interacts with host CCNT1. Associates with the P-TEFb complex composed at least of Tat, P-TEFb (CDK9 and CCNT1), TAR RNA, RNA Pol II. Recruits the HATs CREBBP, TAF1/TFIID, EP300, PCAF and GCN5L2. Interacts with host KAT5/Tip60; this interaction targets the latter to degradation. Interacts with the host deacetylase SIRT1. Interacts with host capping enzyme RNGTT; this interaction stimulates RNGTT. Binds to host KDR, and to the host integrins ITGAV/ITGB3 and ITGA5/ITGB1. Interacts with host KPNB1/importin beta-1 without previous binding to KPNA1/importin alpha-1. Interacts with EIF2AK2. Interacts with host nucleosome assembly protein NAP1L1; this interaction may be required for the transport of Tat within the nucleus, since the two proteins interact at the nuclear rim. Interacts with host C1QBP/SF2P32; this interaction involves lysine-acetylated Tat. Interacts with the host chemokine receptors CCR2, CCR3 and CXCR4. Interacts with host DPP4/CD26; this interaction may trigger an anti-proliferative effect. Interacts with host LDLR. Interacts with the host extracellular matrix metalloproteinase MMP1. Interacts with host PRMT6; this interaction mediates Tat's methylation. Interacts with, and is ubiquitinated by MDM2/Hdm2. Interacts with host PSMC3 and HTATIP2. Interacts with STAB1; this interaction may overcome SATB1-mediated repression of IL2 and IL2RA (interleukin) in T cells by binding to the same domain than HDAC1. Interacts (when acetylated) with human CDK13, thereby increasing HIV-1 mRNA splicing and promoting the production of the doubly spliced HIV-1 protein Nef. Interacts with host TBP; this interaction modulates the activity of transcriptional pre-initiation complex. Interacts with host RELA. Interacts with host PLSCR1; this interaction negatively regulates Tat transactivation activity by altering its subcellular distribution. In terms of processing, asymmetrical arginine methylation by host PRMT6 seems to diminish the transactivation capacity of Tat and affects the interaction with host CCNT1. Acetylation by EP300, CREBBP, GCN5L2/GCN5 and PCAF regulates the transactivation activity of Tat. EP300-mediated acetylation of Lys-50 promotes dissociation of Tat from the TAR RNA through the competitive binding to PCAF's bromodomain. In addition, the non-acetylated Tat's N-terminus can also interact with PCAF. PCAF-mediated acetylation of Lys-28 enhances Tat's binding to CCNT1. Lys-50 is deacetylated by SIRT1. Post-translationally, polyubiquitination by host MDM2 does not target Tat to degradation, but activates its transactivation function and fosters interaction with CCNT1 and TAR RNA. In terms of processing, phosphorylated by EIF2AK2 on serine and threonine residues adjacent to the basic region important for TAR RNA binding and function. Phosphorylation of Tat by EIF2AK2 is dependent on the prior activation of EIF2AK2 by dsRNA.

Its subcellular location is the host nucleus. It is found in the host nucleolus. It localises to the host cytoplasm. The protein localises to the secreted. Transcriptional activator that increases RNA Pol II processivity, thereby increasing the level of full-length viral transcripts. Recognizes a hairpin structure at the 5'-LTR of the nascent viral mRNAs referred to as the transactivation responsive RNA element (TAR) and recruits the cyclin T1-CDK9 complex (P-TEFb complex) that will in turn hyperphosphorylate the RNA polymerase II to allow efficient elongation. The CDK9 component of P-TEFb and other Tat-activated kinases hyperphosphorylate the C-terminus of RNA Pol II that becomes stabilized and much more processive. Other factors such as HTATSF1/Tat-SF1, SUPT5H/SPT5, and HTATIP2 are also important for Tat's function. Besides its effect on RNA Pol II processivity, Tat induces chromatin remodeling of proviral genes by recruiting the histone acetyltransferases (HATs) CREBBP, EP300 and PCAF to the chromatin. This also contributes to the increase in proviral transcription rate, especially when the provirus integrates in transcriptionally silent region of the host genome. To ensure maximal activation of the LTR, Tat mediates nuclear translocation of NF-kappa-B by interacting with host RELA. Through its interaction with host TBP, Tat may also modulate transcription initiation. Tat can reactivate a latently infected cell by penetrating in it and transactivating its LTR promoter. In the cytoplasm, Tat is thought to act as a translational activator of HIV-1 mRNAs. Its function is as follows. Extracellular circulating Tat can be endocytosed by surrounding uninfected cells via the binding to several surface receptors such as CD26, CXCR4, heparan sulfate proteoglycans (HSPG) or LDLR. Neurons are rarely infected, but they internalize Tat via their LDLR. Through its interaction with nuclear HATs, Tat is potentially able to control the acetylation-dependent cellular gene expression. Modulates the expression of many cellular genes involved in cell survival, proliferation or in coding for cytokines or cytokine receptors. Tat plays a role in T-cell and neurons apoptosis. Tat induced neurotoxicity and apoptosis probably contribute to neuroAIDS. Circulating Tat also acts as a chemokine-like and/or growth factor-like molecule that binds to specific receptors on the surface of the cells, affecting many cellular pathways. In the vascular system, Tat binds to ITGAV/ITGB3 and ITGA5/ITGB1 integrins dimers at the surface of endothelial cells and competes with bFGF for heparin-binding sites, leading to an excess of soluble bFGF. In Human immunodeficiency virus type 1 group M subtype A (isolate U455) (HIV-1), this protein is Protein Tat.